The sequence spans 142 residues: Large ribosomal subunit protein uL11 (142 aa).

It belongs to the universal ribosomal protein uL11 family. Part of the ribosomal stalk of the 50S ribosomal subunit. Interacts with L10 and the large rRNA to form the base of the stalk. L10 forms an elongated spine to which L12 dimers bind in a sequential fashion forming a multimeric L10(L12)X complex. Post-translationally, one or more lysine residues are methylated.

Forms part of the ribosomal stalk which helps the ribosome interact with GTP-bound translation factors. In Mycoplasma capricolum subsp. capricolum (strain California kid / ATCC 27343 / NCTC 10154), this protein is Large ribosomal subunit protein uL11.